Reading from the N-terminus, the 1303-residue chain is Phosphoribosylformylglycinamidine synthase (1303 aa).

Residues 308–319 (GASTGSGGEIRD) and alanine 679 each bind ATP. Mg(2+)-binding residues include glutamate 719, asparagine 723, and aspartate 892. Residues 1003-1023 (LRDNPACADQEHEAKKDNSDP) are disordered. The segment covering 1011–1021 (DQEHEAKKDNS) has biased composition (basic and acidic residues). Positions 1050–1303 (MAILREQGVN…MFQNARKNIG (254 aa)) constitute a Glutamine amidotransferase type-1 domain. The active-site Nucleophile is the cysteine 1143. Residues histidine 1268 and glutamate 1270 contribute to the active site.

The protein in the N-terminal section; belongs to the FGAMS family. Monomer.

It is found in the cytoplasm. The catalysed reaction is N(2)-formyl-N(1)-(5-phospho-beta-D-ribosyl)glycinamide + L-glutamine + ATP + H2O = 2-formamido-N(1)-(5-O-phospho-beta-D-ribosyl)acetamidine + L-glutamate + ADP + phosphate + H(+). It functions in the pathway purine metabolism; IMP biosynthesis via de novo pathway; 5-amino-1-(5-phospho-D-ribosyl)imidazole from N(2)-formyl-N(1)-(5-phospho-D-ribosyl)glycinamide: step 1/2. Its function is as follows. Phosphoribosylformylglycinamidine synthase involved in the purines biosynthetic pathway. Catalyzes the ATP-dependent conversion of formylglycinamide ribonucleotide (FGAR) and glutamine to yield formylglycinamidine ribonucleotide (FGAM) and glutamate. The polypeptide is Phosphoribosylformylglycinamidine synthase (Aliivibrio fischeri (strain ATCC 700601 / ES114) (Vibrio fischeri)).